The primary structure comprises 570 residues: Protein misato homolog 1 (570 aa).

A Phosphoserine modification is found at serine 495.

Belongs to the misato family. As to expression, present in all cell lines tested (at protein level). Widely expressed.

The protein localises to the mitochondrion outer membrane. Its subcellular location is the cytoplasm. In terms of biological role, involved in the regulation of mitochondrial distribution and morphology. Required for mitochondrial fusion and mitochondrial network formation. The sequence is that of Protein misato homolog 1 (MSTO1) from Homo sapiens (Human).